The sequence spans 45 residues: Sperm-specific protein Phi-3 (45 aa).

Positions alanine 1–lysine 45 are disordered.

Its subcellular location is the nucleus. It localises to the chromosome. Involved in nuclear basic protein transition: histones are replaced by spermatid specific proteins which are themselves replaced by protamines in late spermatids. In Mytilus californianus (California mussel), this protein is Sperm-specific protein Phi-3.